The primary structure comprises 146 residues: Putative pre-16S rRNA nuclease (146 aa).

The protein belongs to the YqgF nuclease family.

It is found in the cytoplasm. In terms of biological role, could be a nuclease involved in processing of the 5'-end of pre-16S rRNA. The protein is Putative pre-16S rRNA nuclease of Pseudomonas syringae pv. syringae (strain B728a).